Here is a 279-residue protein sequence, read N- to C-terminus: Ribonuclease T2 protein rnst-2 (279 aa).

The first 17 residues, 1–17, serve as a signal peptide directing secretion; sequence MKLLLLLCISCIPLAYS. An intrachain disulfide couples C37 to C48. Residue H60 is part of the active site. Residue N68 is glycosylated (N-linked (GlcNAc...) asparagine). Active-site residues include E114 and H118. A disulfide bond links C200 and C210.

The protein belongs to the RNase T2 family. In terms of tissue distribution, expressed in the pharynx, hypodermis, muscle cells, sheath cells, intestinal cells, the vulva and tail regions.

The protein resides in the lysosome. The enzyme catalyses a ribonucleotidyl-ribonucleotide-RNA + H2O = a 3'-end 3'-phospho-ribonucleotide-RNA + a 5'-end dephospho-ribonucleoside-RNA + H(+). Probable endoribonuclease involved in the autophagy-mediated degradation of ribosomal RNA and ribosomal proteins in lysosomes. This chain is Ribonuclease T2 protein rnst-2, found in Caenorhabditis elegans.